The sequence spans 724 residues: Palmitoyltransferase AKR1 (724 aa).

Residues 1–308 are Cytoplasmic-facing; it reads MSGQLNVAED…HAKMVTFFTP (308 aa). ANK repeat units follow at residues 54–84, 90–119, 124–153, 157–187, 191–220, and 224–253; these read PTLVKYHAACQRGDLKTVKDMIEAGVIDVKA, EQVSGLHWASANNRLNLVRYLIAQGADVNI, LEATPLHWASKSGYVYIVHCLLEHGADPLI, QGYNLLHTSTFSSEVMLITYVLFTGQIPVDS, TGKTALHWAAYQGDPNTVEALLKFDADVRV, and GGFTPLHWATVKGHPHVLKALIEHGSDVFL. A helical transmembrane segment spans residues 309 to 329; that stretch reads WLILGLILSFFAYFSILLAIL. Topologically, residues 330–331 are lumenal; it reads GC. The helical transmembrane segment at 332–352 threads the bilayer; it reads LLTVLAAGYGLYNFVFPSFIL. The Cytoplasmic segment spans residues 353 to 360; sequence MKRIVIFK. Residues 361–381 traverse the membrane as a helical segment; sequence TPLLAGILSGTIFWLLYVWLF. Over 382 to 392 the chain is Lumenal; that stretch reads KMLPATFDDEP. Residues 393–413 traverse the membrane as a helical segment; that stretch reads ILNLTVFALFAGVVFLLTKLL. Residues 414–489 are Cytoplasmic-facing; sequence QSDPGYIVPA…YNYIGFRNHK (76 aa). One can recognise a DHHC domain in the interval 446-496; that stretch reads HFCIHSWIRLPLRAKYKRFVHSVILRYDHYCPWIYNYIGFRNHKIFIYFIL. The active-site S-palmitoyl cysteine intermediate is cysteine 476. Residues 490-510 form a helical membrane-spanning segment; it reads IFIYFILLLDLGILALAKLCL. The Lumenal portion of the chain corresponds to 511–543; it reads EYFDELKDHAKNKDALKCSILSKDLCAGFTYDP. Residues 544-564 traverse the membrane as a helical segment; that stretch reads FTLFLLEWVCVQGMWILALSF. At 565-724 the chain is on the cytoplasmic side; it reads VQFFECLKGV…ERVISIEEIV (160 aa).

This sequence belongs to the DHHC palmitoyltransferase family. AKR/ZDHHC17 subfamily.

It is found in the early endosome membrane. Its subcellular location is the golgi apparatus membrane. It catalyses the reaction L-cysteinyl-[protein] + hexadecanoyl-CoA = S-hexadecanoyl-L-cysteinyl-[protein] + CoA. Palmitoyltransferase specific for casein kinase 1. The protein is Palmitoyltransferase AKR1 (AKR1) of Eremothecium gossypii (strain ATCC 10895 / CBS 109.51 / FGSC 9923 / NRRL Y-1056) (Yeast).